We begin with the raw amino-acid sequence, 914 residues long: Protein translocase subunit SecA (914 aa).

Residues Gln87, 105-109 (GEGKT), and Asp508 each bind ATP. Positions 898, 900, 909, and 910 each coordinate Zn(2+).

The protein belongs to the SecA family. As to quaternary structure, monomer and homodimer. Part of the essential Sec protein translocation apparatus which comprises SecA, SecYEG and auxiliary proteins SecDF-YajC and YidC. Requires Zn(2+) as cofactor.

The protein localises to the cell inner membrane. Its subcellular location is the cytoplasm. It carries out the reaction ATP + H2O + cellular proteinSide 1 = ADP + phosphate + cellular proteinSide 2.. In terms of biological role, part of the Sec protein translocase complex. Interacts with the SecYEG preprotein conducting channel. Has a central role in coupling the hydrolysis of ATP to the transfer of proteins into and across the cell membrane, serving both as a receptor for the preprotein-SecB complex and as an ATP-driven molecular motor driving the stepwise translocation of polypeptide chains across the membrane. The polypeptide is Protein translocase subunit SecA (Xylella fastidiosa (strain 9a5c)).